The chain runs to 864 residues: Leucine--tRNA ligase (864 aa).

Positions 42–52 (PYPSGKLHMGH) match the 'HIGH' region motif. The short motif at 624-628 (KMSKS) is the 'KMSKS' region element. Position 627 (K627) interacts with ATP.

The protein belongs to the class-I aminoacyl-tRNA synthetase family.

Its subcellular location is the cytoplasm. It catalyses the reaction tRNA(Leu) + L-leucine + ATP = L-leucyl-tRNA(Leu) + AMP + diphosphate. The protein is Leucine--tRNA ligase of Burkholderia thailandensis (strain ATCC 700388 / DSM 13276 / CCUG 48851 / CIP 106301 / E264).